We begin with the raw amino-acid sequence, 20 residues long: Peptide encoded by miPEP171b (20 aa).

Lateral root initiations.

Functionally, regulatory peptide encoded by the primary transcript (pri-miR171b) of the microRNA miR171b that enhances the accumulation of its corresponding mature miRNA. Acts probably as a transcriptional activator of its corresponding pri-miRNA. Has no effect on the accumulation of other miRNAs. Addition of synthetic miPEP171b increases the abundance of miR171b, with consequent reduction of lateral root formation. The protein is Peptide encoded by miPEP171b of Medicago truncatula (Barrel medic).